A 518-amino-acid chain; its full sequence is MLTNIRAFAQQKSRLSALRLVLAFILGASTALSFAPYSLWIIYPIAMSLALWQSESLNPKASFFHWLSFGFGCFAVGISWVHVSMDTFGGLPLPASVALMALLALYLALYPALTGLGLAWFTRTNSHSLWRNLLLFPALWTLTEWARGWVLTGFPWIWAGYSQTEGPLKALASIIGALGLSFIIAMIAGALALCFSKRYKSLLILLPITAVAAWVAPKLSQIQPTGESVKVALVQGNIPQSMKWEPEALWPTLLKYMDLSREHFDADIIVWPEAAIPAPESMVQDFLDNANKVANLNHTSIITGIISRQQEDFYNSLIVLGNHNQKQQDNPDYESDGSNQFKKHHLLPIGEFVPFQALLRPIAPFFNLPMSSFARGDYLQPNLSALGHKVAPAICYEIAFPEQLRDSVNLGTDLLLTVSNDAWFGTSNGPLQHMEIAQMRAIELGRPLVRATNNGVTAVVDENGNITAALPQFETGVLSATIPLVTGQTWFAKIGQTPLLILCGALLLVGFIRRQKQQ.

Transmembrane regions (helical) follow at residues 22 to 42, 63 to 83, 101 to 121, 134 to 154, 174 to 194, and 202 to 222; these read LAFILGASTALSFAPYSLWII, FFHWLSFGFGCFAVGISWVHV, ALLALYLALYPALTGLGLAWF, LLFPALWTLTEWARGWVLTGF, IIGALGLSFIIAMIAGALALC, and LLILLPITAVAAWVAPKLSQI. The 251-residue stretch at 234–484 folds into the CN hydrolase domain; sequence VQGNIPQSMK…TGVLSATIPL (251 aa). Residue Glu-273 is the Proton acceptor of the active site. Lys-343 is an active-site residue. Cys-395 acts as the Nucleophile in catalysis. The helical transmembrane segment at 492 to 512 threads the bilayer; that stretch reads AKIGQTPLLILCGALLLVGFI.

This sequence belongs to the CN hydrolase family. Apolipoprotein N-acyltransferase subfamily.

Its subcellular location is the cell inner membrane. It carries out the reaction N-terminal S-1,2-diacyl-sn-glyceryl-L-cysteinyl-[lipoprotein] + a glycerophospholipid = N-acyl-S-1,2-diacyl-sn-glyceryl-L-cysteinyl-[lipoprotein] + a 2-acyl-sn-glycero-3-phospholipid + H(+). It functions in the pathway protein modification; lipoprotein biosynthesis (N-acyl transfer). In terms of biological role, catalyzes the phospholipid dependent N-acylation of the N-terminal cysteine of apolipoprotein, the last step in lipoprotein maturation. The sequence is that of Apolipoprotein N-acyltransferase from Shewanella oneidensis (strain ATCC 700550 / JCM 31522 / CIP 106686 / LMG 19005 / NCIMB 14063 / MR-1).